A 495-amino-acid polypeptide reads, in one-letter code: Probable cytosol aminopeptidase (495 aa).

2 residues coordinate Mn(2+): Lys266 and Asp271. Lys278 is an active-site residue. Mn(2+)-binding residues include Asp289, Asp348, and Glu350. Arg352 is an active-site residue.

This sequence belongs to the peptidase M17 family. Requires Mn(2+) as cofactor.

The protein localises to the cytoplasm. The enzyme catalyses Release of an N-terminal amino acid, Xaa-|-Yaa-, in which Xaa is preferably Leu, but may be other amino acids including Pro although not Arg or Lys, and Yaa may be Pro. Amino acid amides and methyl esters are also readily hydrolyzed, but rates on arylamides are exceedingly low.. The catalysed reaction is Release of an N-terminal amino acid, preferentially leucine, but not glutamic or aspartic acids.. In terms of biological role, presumably involved in the processing and regular turnover of intracellular proteins. Catalyzes the removal of unsubstituted N-terminal amino acids from various peptides. The sequence is that of Probable cytosol aminopeptidase from Pseudomonas aeruginosa (strain LESB58).